The following is a 78-amino-acid chain: Esculentin-2PLa (78 aa).

An N-terminal signal peptide occupies residues 1–22 (MFTTKKSMLLLFFLGTISLSLC). Residues 23–39 (EEERGADEEEGDGEKLM) constitute a propeptide that is removed on maturation. An intrachain disulfide couples C72 to C78.

In terms of tissue distribution, expressed by the skin glands.

It localises to the secreted. Its function is as follows. Antimicrobial activity against the Gram-negative bacterium E.coli, the Gram-positive bacterium S.aureus and the yeast C.albicans. This Lithobates palustris (Pickerel frog) protein is Esculentin-2PLa.